The following is a 403-amino-acid chain: Large ribosomal subunit protein uL3 (403 aa).

The tract at residues 1 to 38 (MSHRKFSAPRHGSLGFLPRKRSSRHRGKVKSFPKDDSS) is disordered. S13 is modified (phosphoserine). Residues 18 to 31 (PRKRSSRHRGKVKS) show a composition bias toward basic residues. A Glycyl lysine isopeptide (Lys-Gly) (interchain with G-Cter in SUMO2) cross-link involves residue K39. At K136 the chain carries N6-acetyllysine. Glycyl lysine isopeptide (Lys-Gly) (interchain with G-Cter in SUMO2) cross-links involve residues K224 and K226. Residue H245 is modified to Tele-methylhistidine. N6-acetyllysine; alternate is present on residues K286 and K294. A Glycyl lysine isopeptide (Lys-Gly) (interchain with G-Cter in SUMO2); alternate cross-link involves residue K286. A Glycyl lysine isopeptide (Lys-Gly) (interchain with G-Cter in SUMO1); alternate cross-link involves residue K294. S304 bears the Phosphoserine mark. N6-acetyllysine; alternate is present on K366. K366 is covalently cross-linked (Glycyl lysine isopeptide (Lys-Gly) (interchain with G-Cter in SUMO2); alternate). K373 is modified (N6-acetyllysine). Residues K386, K393, and K399 each participate in a glycyl lysine isopeptide (Lys-Gly) (interchain with G-Cter in SUMO2) cross-link.

It belongs to the universal ribosomal protein uL3 family. In terms of assembly, component of the large ribosomal subunit. Interacts with DHX33. In terms of processing, constitutively monomethylated at His-245 by METTL18. Methylation at His-245 regulates translation elongation by slowing ribosome traversal on tyrosine codons: slower elongation provides enough time for proper folding of synthesized proteins and prevents cellular aggregation of tyrosine-rich proteins It is not required for incorporation of RPL3 into ribosomes.

Its subcellular location is the nucleus. It is found in the nucleolus. The protein resides in the cytoplasm. In terms of biological role, component of the large ribosomal subunit. The ribosome is a large ribonucleoprotein complex responsible for the synthesis of proteins in the cell. The chain is Large ribosomal subunit protein uL3 (RPL3) from Sus scrofa (Pig).